We begin with the raw amino-acid sequence, 154 residues long: Probable ubiquitin-conjugating enzyme E2 31 (154 aa).

The 146-residue stretch at 8–153 folds into the UBC core domain; it reads KAAQRIAMEY…AREFTARHAN (146 aa). Residue Cys-91 is the Glycyl thioester intermediate of the active site.

Belongs to the ubiquitin-conjugating enzyme family.

The enzyme catalyses S-ubiquitinyl-[E1 ubiquitin-activating enzyme]-L-cysteine + [E2 ubiquitin-conjugating enzyme]-L-cysteine = [E1 ubiquitin-activating enzyme]-L-cysteine + S-ubiquitinyl-[E2 ubiquitin-conjugating enzyme]-L-cysteine.. Its pathway is protein modification; protein ubiquitination. Functionally, accepts the ubiquitin from the E1 complex and catalyzes its covalent attachment to other proteins. The polypeptide is Probable ubiquitin-conjugating enzyme E2 31 (UBC31) (Arabidopsis thaliana (Mouse-ear cress)).